Here is a 352-residue protein sequence, read N- to C-terminus: UDP-N-acetylglucosamine--N-acetylmuramyl-(pentapeptide) pyrophosphoryl-undecaprenol N-acetylglucosamine transferase (352 aa).

UDP-N-acetyl-alpha-D-glucosamine-binding residues include serine 195 and glutamine 287.

This sequence belongs to the glycosyltransferase 28 family. MurG subfamily.

The protein resides in the cell membrane. It carries out the reaction Mur2Ac(oyl-L-Ala-gamma-D-Glu-L-Lys-D-Ala-D-Ala)-di-trans,octa-cis-undecaprenyl diphosphate + UDP-N-acetyl-alpha-D-glucosamine = beta-D-GlcNAc-(1-&gt;4)-Mur2Ac(oyl-L-Ala-gamma-D-Glu-L-Lys-D-Ala-D-Ala)-di-trans,octa-cis-undecaprenyl diphosphate + UDP + H(+). Its pathway is cell wall biogenesis; peptidoglycan biosynthesis. In terms of biological role, cell wall formation. Catalyzes the transfer of a GlcNAc subunit on undecaprenyl-pyrophosphoryl-MurNAc-pentapeptide (lipid intermediate I) to form undecaprenyl-pyrophosphoryl-MurNAc-(pentapeptide)GlcNAc (lipid intermediate II). The chain is UDP-N-acetylglucosamine--N-acetylmuramyl-(pentapeptide) pyrophosphoryl-undecaprenol N-acetylglucosamine transferase from Streptococcus pneumoniae serotype 19F (strain G54).